The primary structure comprises 292 residues: NAD kinase (292 aa).

The Proton acceptor role is filled by Asp73. NAD(+)-binding positions include 73-74 (DG), 147-148 (NE), His158, Arg175, Asp177, 188-193 (TAYSLS), and Gln247.

It belongs to the NAD kinase family. A divalent metal cation is required as a cofactor.

It localises to the cytoplasm. It carries out the reaction NAD(+) + ATP = ADP + NADP(+) + H(+). Functionally, involved in the regulation of the intracellular balance of NAD and NADP, and is a key enzyme in the biosynthesis of NADP. Catalyzes specifically the phosphorylation on 2'-hydroxyl of the adenosine moiety of NAD to yield NADP. This chain is NAD kinase, found in Escherichia coli (strain SMS-3-5 / SECEC).